The chain runs to 117 residues: Type II secretion system protein I (117 aa).

Positions 1–6 are cleaved as a propeptide — leader sequence; it reads MKSKRG. Residue Phe-7 is modified to N-methylphenylalanine. A helical transmembrane segment spans residues 7 to 27; sequence FTLLEVLVALAIFATAAISVI.

It belongs to the GSP I family. In terms of assembly, type II secretion is composed of four main components: the outer membrane complex, the inner membrane complex, the cytoplasmic secretion ATPase and the periplasm-spanning pseudopilus. Interacts with core component EpsG. Post-translationally, cleaved by prepilin peptidase. In terms of processing, methylated by prepilin peptidase at the amino group of the N-terminal phenylalanine once the leader sequence is cleaved by prepilin peptidase.

It is found in the cell inner membrane. In terms of biological role, component of the type II secretion system required for the energy-dependent secretion of extracellular factors such as proteases and toxins from the periplasm. Part of the pseudopilus tip complex that is critical for the recognition and binding of secretion substrates. In Vibrio cholerae serotype O1 (strain ATCC 39315 / El Tor Inaba N16961), this protein is Type II secretion system protein I (epsI).